The sequence spans 376 residues: MWTPSRKQLCLAFLSVCVLSAGSFFFHLNGGNFFQNALTFSVLCPDYHLLKSPVAMVCLPYPSNASSGSPSCPEQSLLSGTWTITPGGRFGNQMGQYATLLALAQLNGRRAFIQPEMHTTLAPVFRISLPVLDPEVDSLTPWQHLVLHDWMSEEYSHLEDPFLKLSGFPCSWTFFHHLREQIRREFTLHDHLREDAQRLLSGLRIGPAGIRPRTYVGVHVRRGDYLEVMPNRWKGVVGDRAYLQKAMDWFRARHKDPIFVVTSNGMRWCLENIDTSHGDVVFAGNGQEGTPGKDFALLTQCNHTIMTIGTFGFWAAYLAGGDTVYLANFTLPDSEFLKIFRPKAAFLPEWVGINADLSPLQAQFDPWETDSLFRLA.

Topologically, residues 1–12 (MWTPSRKQLCLA) are cytoplasmic. A helical; Signal-anchor for type II membrane protein transmembrane segment spans residues 13–29 (FLSVCVLSAGSFFFHLN). The Lumenal portion of the chain corresponds to 30-376 (GGNFFQNALT…WETDSLFRLA (347 aa)). Residues asparagine 64, asparagine 302, and asparagine 328 are each glycosylated (N-linked (GlcNAc...) asparagine).

Belongs to the glycosyltransferase 11 family.

Its subcellular location is the golgi apparatus. It localises to the golgi stack membrane. It carries out the reaction a beta-D-galactosyl-(1-&gt;4)-N-acetyl-beta-D-glucosaminyl derivative + GDP-beta-L-fucose = an alpha-L-Fuc-(1-&gt;2)-beta-D-Gal-(1-&gt;4)-beta-D-GlcNAc derivative + GDP + H(+). It catalyses the reaction a ganglioside GA1 + GDP-beta-L-fucose = a ganglioside Fuc-GA1 + GDP + H(+). The catalysed reaction is a beta-D-Gal-(1-&gt;3)-beta-D-GlcNAc-(1-&gt;3)-beta-D-Gal-(1-&gt;4)-beta-D-Glc-(1&lt;-&gt;1')-Cer(d18:1(4E)) + GDP-beta-L-fucose = alpha-L-fucosyl-(1-&gt;2)- beta-D-galactosyl-(1-&gt;3)-N-acetyl-beta-D-glucosaminyl-(1-&gt;3)-beta-D-galactosyl-(1-&gt;4)-beta-D-glucosyl-(1&lt;-&gt;1')-N-acylsphing-4-enine + GDP + H(+). The enzyme catalyses a neolactoside nLc4Cer(d18:1(4E)) + GDP-beta-L-fucose = a neolactoside IV(2)-alpha-Fuc-nLc4Cer(d18:1(4E)) + GDP + H(+). It carries out the reaction a ganglioside GM1 + GDP-beta-L-fucose = a ganglioside Fuc-GM1 + GDP + H(+). It catalyses the reaction beta-D-galactosyl-(1-&gt;3)-N-acetyl-D-galactosamine + GDP-beta-L-fucose = alpha-L-fucosyl-(1-&gt;2)-beta-D-galactosyl-(1-&gt;3)-N-acetyl-D-galactosamine + GDP + H(+). It participates in protein modification; protein glycosylation. Functionally, catalyzes the transfer of L-fucose, from a guanosine diphosphate-beta-L-fucose, to the terminal galactose residue of glycoconjugates through an alpha(1,2) linkage leading to H antigen synthesis that is an intermediate substrate in the synthesis of ABO blood group antigens. H antigen is essential for maturation of the glomerular layer of the main olfactory bulb, in cell migration and early cell-cell contacts during tumor associated angiogenesis. Preferentially fucosylates soluble lactose and to a lesser extent fucosylates glycolipids gangliosides GA1 and GM1a. This is Galactoside alpha-(1,2)-fucosyltransferase 1 from Rattus norvegicus (Rat).